The following is a 90-amino-acid chain: DNA-binding protein HU-alpha (90 aa).

This sequence belongs to the bacterial histone-like protein family. As to quaternary structure, heterodimer of an alpha and a beta chain.

Histone-like DNA-binding protein which is capable of wrapping DNA to stabilize it, and thus to prevent its denaturation under extreme environmental conditions. In Escherichia coli O157:H7, this protein is DNA-binding protein HU-alpha (hupA).